Consider the following 76-residue polypeptide: Small ribosomal subunit protein bS18 (76 aa).

The protein belongs to the bacterial ribosomal protein bS18 family. As to quaternary structure, part of the 30S ribosomal subunit. Forms a tight heterodimer with protein bS6.

Functionally, binds as a heterodimer with protein bS6 to the central domain of the 16S rRNA, where it helps stabilize the platform of the 30S subunit. This is Small ribosomal subunit protein bS18 from Nitrosomonas eutropha (strain DSM 101675 / C91 / Nm57).